The sequence spans 188 residues: Preprocaerulein type-1 (188 aa).

A signal peptide spans 1-26; the sequence is MFKGILLCVLFAVLSANPLSQPEGFA. Residues 27-170 constitute a propeptide that is removed on maturation; it reads DEERDVRGLA…ANDERRFADG (144 aa). The interval 152-188 is disordered; the sequence is LGGSPQQREANDERRFADGQQDYTGWMDFGRRNGEDD. At Y174 the chain carries Sulfotyrosine. Residue F180 is modified to Phenylalanine amide. Positions 184-188 are excised as a propeptide; the sequence is NGEDD.

This sequence belongs to the gastrin/cholecystokinin family. As to expression, expressed by the skin glands.

It localises to the secreted. Functionally, the pharmacological activities of caerulein are quite similar to the physiological activities of gastrin and related peptides. In Xenopus laevis (African clawed frog), this protein is Preprocaerulein type-1.